Reading from the N-terminus, the 188-residue chain is MSIKSDKWIRRMAQEHGMIEPFVERQVRGEQDSRVISFGVSSYGYDVRCADEFKVFTNINSATVDPKNFDAGSFVDIKSDVCIIPPNSFALARTVEYFRIPRDVLTICLGKSTYARCGIIVNVTPLEPEWEGHVTLEFSNTTTLPAKIYANEGVAQMLFLQSDEECEVSYKDRGGKYQGQRGVTLPRT.

DCTP contacts are provided by residues 111-116, 135-137, Q156, Y170, and Q180; these read KSTYAR and TLE. E137 (proton donor/acceptor) is an active-site residue.

It belongs to the dCTP deaminase family. Homotrimer.

The catalysed reaction is dCTP + H2O + H(+) = dUTP + NH4(+). It participates in pyrimidine metabolism; dUMP biosynthesis; dUMP from dCTP (dUTP route): step 1/2. In terms of biological role, catalyzes the deamination of dCTP to dUTP. The polypeptide is dCTP deaminase (Pseudomonas putida (strain GB-1)).